Here is a 487-residue protein sequence, read N- to C-terminus: UDP-N-acetylmuramoyl-L-alanyl-D-glutamate--2,6-diaminopimelate ligase (487 aa).

Residues leucine 23 and serine 25 each contribute to the UDP-N-acetyl-alpha-D-muramoyl-L-alanyl-D-glutamate site. Residue 108-114 (GTNGKTS) coordinates ATP. Residues 150 to 151 (TT), serine 177, glutamine 183, and arginine 185 contribute to the UDP-N-acetyl-alpha-D-muramoyl-L-alanyl-D-glutamate site. Lysine 217 is subject to N6-carboxylysine. Meso-2,6-diaminopimelate contacts are provided by residues arginine 378, 402 to 405 (DNPR), glycine 453, and glutamate 457. The Meso-diaminopimelate recognition motif signature appears at 402-405 (DNPR).

Belongs to the MurCDEF family. MurE subfamily. The cofactor is Mg(2+). Carboxylation is probably crucial for Mg(2+) binding and, consequently, for the gamma-phosphate positioning of ATP.

It is found in the cytoplasm. It catalyses the reaction UDP-N-acetyl-alpha-D-muramoyl-L-alanyl-D-glutamate + meso-2,6-diaminopimelate + ATP = UDP-N-acetyl-alpha-D-muramoyl-L-alanyl-gamma-D-glutamyl-meso-2,6-diaminopimelate + ADP + phosphate + H(+). Its pathway is cell wall biogenesis; peptidoglycan biosynthesis. Catalyzes the addition of meso-diaminopimelic acid to the nucleotide precursor UDP-N-acetylmuramoyl-L-alanyl-D-glutamate (UMAG) in the biosynthesis of bacterial cell-wall peptidoglycan. The protein is UDP-N-acetylmuramoyl-L-alanyl-D-glutamate--2,6-diaminopimelate ligase of Pseudomonas aeruginosa (strain ATCC 15692 / DSM 22644 / CIP 104116 / JCM 14847 / LMG 12228 / 1C / PRS 101 / PAO1).